The chain runs to 624 residues: Na(+)/H(+) antiporter NhaA (624 aa).

The unknown stretch occupies residues 1–164; the sequence is MNPELPPNHL…TFFINGRRYD (164 aa). Residues 165–624 are na(+)/H(+) antiporter NhaA; it reads GPWDVRSLSE…NAQAEEEKNP (460 aa). Helical transmembrane passes span 199–219, 240–260, 279–299, 319–339, 348–368, 371–391, 407–427, 497–517, 521–541, 565–585, and 596–616; these read GIMLLLATALAVVLSNSALGP, LSLRHWINDGLLVIFFLVVGL, LPIAAAIGGMAVPALLYLILV, GWGVPMATDTAFAIALIAMMG, VFLTAAAIVDDIGAIIVVAIF, GELHIAYLGSAVAIAGLLALL, IVLWVFVYASGIHATLAGIIL, FLVLPVFALANAGVVVETSVF, IPLMLGTATALVIGKPLGFIT, GAGALAGIGFTMSLFIASQAF, and IAIFGGSILSAIIGVAILWNA.

The protein belongs to the NhaA Na(+)/H(+) (TC 2.A.33) antiporter family.

The protein resides in the cell inner membrane. The catalysed reaction is Na(+)(in) + 2 H(+)(out) = Na(+)(out) + 2 H(+)(in). Na(+)/H(+) antiporter that extrudes sodium in exchange for external protons. This chain is Na(+)/H(+) antiporter NhaA, found in Nitrosospira multiformis (strain ATCC 25196 / NCIMB 11849 / C 71).